The primary structure comprises 213 residues: Orotate phosphoribosyltransferase (213 aa).

Lys26 contributes to the 5-phospho-alpha-D-ribose 1-diphosphate binding site. 34-35 (FF) provides a ligand contact to orotate. 5-phospho-alpha-D-ribose 1-diphosphate contacts are provided by residues 72-73 (YK), Arg99, Lys100, Lys103, His105, and 124-132 (DDVITAGTA). Orotate-binding residues include Thr128 and Arg156.

This sequence belongs to the purine/pyrimidine phosphoribosyltransferase family. PyrE subfamily. Homodimer. The cofactor is Mg(2+).

It carries out the reaction orotidine 5'-phosphate + diphosphate = orotate + 5-phospho-alpha-D-ribose 1-diphosphate. Its pathway is pyrimidine metabolism; UMP biosynthesis via de novo pathway; UMP from orotate: step 1/2. Functionally, catalyzes the transfer of a ribosyl phosphate group from 5-phosphoribose 1-diphosphate to orotate, leading to the formation of orotidine monophosphate (OMP). This is Orotate phosphoribosyltransferase from Shigella flexneri serotype 5b (strain 8401).